The primary structure comprises 458 residues: UDP-N-acetylmuramoylalanine--D-glutamate ligase (458 aa).

124-130 is a binding site for ATP; it reads GSDGKTT.

This sequence belongs to the MurCDEF family.

It localises to the cytoplasm. The enzyme catalyses UDP-N-acetyl-alpha-D-muramoyl-L-alanine + D-glutamate + ATP = UDP-N-acetyl-alpha-D-muramoyl-L-alanyl-D-glutamate + ADP + phosphate + H(+). Its pathway is cell wall biogenesis; peptidoglycan biosynthesis. Cell wall formation. Catalyzes the addition of glutamate to the nucleotide precursor UDP-N-acetylmuramoyl-L-alanine (UMA). This is UDP-N-acetylmuramoylalanine--D-glutamate ligase from Clostridium botulinum (strain ATCC 19397 / Type A).